Reading from the N-terminus, the 210-residue chain is Na(+)-translocating NADH-quinone reductase subunit D (210 aa).

5 consecutive transmembrane segments (helical) span residues 42-62 (FVMT…VSLI), 72-92 (IIVQ…VLKA), 103-123 (VFVG…AFAM), 131-151 (LIDG…VGFF), and 178-198 (NGLM…IWVI).

Belongs to the NqrDE/RnfAE family. As to quaternary structure, composed of six subunits; NqrA, NqrB, NqrC, NqrD, NqrE and NqrF.

The protein resides in the cell inner membrane. The enzyme catalyses a ubiquinone + n Na(+)(in) + NADH + H(+) = a ubiquinol + n Na(+)(out) + NAD(+). Its function is as follows. NQR complex catalyzes the reduction of ubiquinone-1 to ubiquinol by two successive reactions, coupled with the transport of Na(+) ions from the cytoplasm to the periplasm. NqrA to NqrE are probably involved in the second step, the conversion of ubisemiquinone to ubiquinol. The chain is Na(+)-translocating NADH-quinone reductase subunit D from Vibrio parahaemolyticus serotype O3:K6 (strain RIMD 2210633).